The following is a 400-amino-acid chain: Nicotinate phosphoribosyltransferase (400 aa).

His-220 carries the post-translational modification Phosphohistidine; by autocatalysis.

The protein belongs to the NAPRTase family. Post-translationally, transiently phosphorylated on a His residue during the reaction cycle. Phosphorylation strongly increases the affinity for substrates and increases the rate of nicotinate D-ribonucleotide production. Dephosphorylation regenerates the low-affinity form of the enzyme, leading to product release.

The catalysed reaction is nicotinate + 5-phospho-alpha-D-ribose 1-diphosphate + ATP + H2O = nicotinate beta-D-ribonucleotide + ADP + phosphate + diphosphate. It participates in cofactor biosynthesis; NAD(+) biosynthesis; nicotinate D-ribonucleotide from nicotinate: step 1/1. Its function is as follows. Catalyzes the synthesis of beta-nicotinate D-ribonucleotide from nicotinate and 5-phospho-D-ribose 1-phosphate at the expense of ATP. The polypeptide is Nicotinate phosphoribosyltransferase (Salmonella dublin (strain CT_02021853)).